An 859-amino-acid chain; its full sequence is Anoctamin-7 (859 aa).

Residues 1–297 (MLRGQAREED…YFAWLGFYTG (297 aa)) lie on the Cytoplasmic side of the membrane. A disordered region spans residues 25 to 50 (GCSYGSTAQASEAGKQQVAPSRVGSS). A helical membrane pass occupies residues 298–318 (WLLPAAVVGTVVFLVGCFLVF). Residues 319 to 362 (SDIPTQELCHSSDSFDMCPLCSDCSFWLLSSACTLAQAGRLFDH) lie on the Extracellular side of the membrane. The chain crosses the membrane as a helical span at residues 363 to 383 (GGTVFFSLFMALWAVLLLEYW). Residues 384-441 (KRKNATLAYRWDCSDYEDIEERPRPQFAATAPMTALNPITGEDEPYFPEKNRVRRMLA) are Cytoplasmic-facing. A helical transmembrane segment spans residues 442-462 (GSVVLLMMVAVVIMCLVSVIL). Over 463–492 (YRAVMAIIVSRSDNAFLSAWASRIASLTGS) the chain is Extracellular. The helical transmembrane segment at 493 to 513 (VVNLVFILILSKVYVLLAQVL) threads the bilayer. Residues 514–530 (TRWEMHRTQTEFEDAFT) lie on the Cytoplasmic side of the membrane. Residues 531–551 (LKVFIFQFVNFYASPVYIAFF) traverse the membrane as a helical segment. The Extracellular segment spans residues 552–651 (KGRFVGYPGN…FHEYLEMVLQ (100 aa)). Residues 652-672 (FGFVTIFVAACPLAPLFALLN) form a helical membrane-spanning segment. Over 673–700 (NWVEIRLDARKFVCEYRRPVAERAQDIG) the chain is Cytoplasmic. A helical transmembrane segment spans residues 701-721 (IWFHILTGLTHLAVISNAFLL). The Extracellular portion of the chain corresponds to 722-780 (AFSSDFLPRVYYSWTHAPDLHGFLNFTLARAPPTFTSAHNRTCRYRAFRDDDGHYSPTY). Residues Asn746 and Asn761 are each glycosylated (N-linked (GlcNAc...) asparagine). The chain crosses the membrane as a helical span at residues 781 to 801 (WTLLAIRLAFVIVFEHVVFSI). Residues 802–859 (GRVLDLLVPDIPESVEIKVKREYYLAKQALAENEALLGATGVKDDQPPSSEPSLGLPA) lie on the Cytoplasmic side of the membrane.

Belongs to the anoctamin family. Highly expressed in the stomach. Expressed at low levels in small intestine and large intestine.

Its subcellular location is the cell membrane. The protein localises to the endoplasmic reticulum. It catalyses the reaction a 1,2-diacyl-sn-glycero-3-phospho-L-serine(in) = a 1,2-diacyl-sn-glycero-3-phospho-L-serine(out). The enzyme catalyses a beta-D-galactosyl-(1&lt;-&gt;1')-N-acylsphing-4-enine(out) = a beta-D-galactosyl-(1&lt;-&gt;1')-N-acylsphing-4-enine(in). The catalysed reaction is a 1,2-diacyl-sn-glycero-3-phosphocholine(in) = a 1,2-diacyl-sn-glycero-3-phosphocholine(out). Has calcium-dependent phospholipid scramblase activity; scrambles phosphatidylserine, phosphatidylcholine and galactosylceramide. Does not exhibit calcium-activated chloride channel (CaCC) activity. May play a role in cell-cell interactions. This chain is Anoctamin-7 (Ano7), found in Mus musculus (Mouse).